Reading from the N-terminus, the 458-residue chain is tRNA-2-methylthio-N(6)-dimethylallyladenosine synthase (458 aa).

The 117-residue stretch at 2–118 (PKLYIKTYGC…VFEHVDGILR (117 aa)) folds into the MTTase N-terminal domain. Residues C11, C47, C81, C170, C174, and C177 each coordinate [4Fe-4S] cluster. A Radical SAM core domain is found at 156 to 389 (PGVRSTAYVS…LAVVNEIAIR (234 aa)). The region spanning 392-455 (RDLVGTVQEV…GFTLYGVPCP (64 aa)) is the TRAM domain.

It belongs to the methylthiotransferase family. MiaB subfamily. As to quaternary structure, monomer. It depends on [4Fe-4S] cluster as a cofactor.

It localises to the cytoplasm. The enzyme catalyses N(6)-dimethylallyladenosine(37) in tRNA + (sulfur carrier)-SH + AH2 + 2 S-adenosyl-L-methionine = 2-methylsulfanyl-N(6)-dimethylallyladenosine(37) in tRNA + (sulfur carrier)-H + 5'-deoxyadenosine + L-methionine + A + S-adenosyl-L-homocysteine + 2 H(+). Functionally, catalyzes the methylthiolation of N6-(dimethylallyl)adenosine (i(6)A), leading to the formation of 2-methylthio-N6-(dimethylallyl)adenosine (ms(2)i(6)A) at position 37 in tRNAs that read codons beginning with uridine. In Akkermansia muciniphila (strain ATCC BAA-835 / DSM 22959 / JCM 33894 / BCRC 81048 / CCUG 64013 / CIP 107961 / Muc), this protein is tRNA-2-methylthio-N(6)-dimethylallyladenosine synthase.